Reading from the N-terminus, the 52-residue chain is UPF0391 membrane protein Tgr7_2500 (52 aa).

Helical transmembrane passes span 4-24 (WALIFLIVAIIAGTLGFSGVA) and 29-49 (WIAQVLFLVFLALLVISLLGG).

The protein belongs to the UPF0391 family.

It is found in the cell membrane. In Thioalkalivibrio sulfidiphilus (strain HL-EbGR7), this protein is UPF0391 membrane protein Tgr7_2500.